Consider the following 388-residue polypeptide: 5-hydroxytryptamine receptor 1B (388 aa).

Positions 1–29 are disordered; sequence MEQPSRLCSPPASGSLTSSQTNHSTFPNP. The Extracellular portion of the chain corresponds to 1–45; it reads MEQPSRLCSPPASGSLTSSQTNHSTFPNPNCSAPDLEPYQDSIAL. Over residues 12-29 the composition is skewed to polar residues; that stretch reads ASGSLTSSQTNHSTFPNP. 2 N-linked (GlcNAc...) asparagine glycosylation sites follow: asparagine 22 and asparagine 30. A helical transmembrane segment spans residues 46–71; sequence PWKVLLATFLGLITLGTTLSNAFVIA. Topologically, residues 72–85 are cytoplasmic; that stretch reads TVSRTRKLHTPANY. Residues 86 to 110 form a helical membrane-spanning segment; it reads LIASLAVTDLLVSILVMPISTMYTV. Residues 111-118 lie on the Extracellular side of the membrane; sequence TGRWTLGQ. Residues 119-144 form a helical membrane-spanning segment; that stretch reads VVCDFWLSSDITCCTASILHLCVIAL. A disulfide bridge links cysteine 121 with cysteine 197. 2 residues coordinate ergotamine: aspartate 128 and threonine 133. A DRY motif; important for ligand-induced conformation changes and signaling motif is present at residues 145–147; that stretch reads DRY. Residues 145–164 are Cytoplasmic-facing; that stretch reads DRYWAITDAVEYSAKRTPKR. Residues 165–183 form a helical membrane-spanning segment; the sequence is AAGMIIMVWVFSVSISMPP. Residues 184–203 lie on the Extracellular side of the membrane; the sequence is LFWRQAKAEEVADCSVNTDH. Valine 199 is a binding site for ergotamine. The chain crosses the membrane as a helical span at residues 204–227; the sequence is ILYTVYSTVGAFYFPTLLLIALYG. Residues 228 to 313 lie on the Cytoplasmic side of the membrane; sequence RIYVEARSRI…AARERKATRT (86 aa). Positions 249–282 are disordered; it reads LTRAQLITDSPGSSSSGTSINSRAPEGPSESGSP. The span at 255-270 shows a compositional bias: low complexity; it reads ITDSPGSSSSGTSINS. A helical transmembrane segment spans residues 314-335; sequence LGIILGAFIVCWLPFFIISLAL. The Extracellular portion of the chain corresponds to 336–345; that stretch reads PICDDACWFH. A helical membrane pass occupies residues 346-368; that stretch reads LAIFDFFNWLGYLNSLINPIIYT. Residues 363-367 carry the NPxxY motif; important for ligand-induced conformation changes and signaling motif; the sequence is NPIIY. Residues 369 to 388 lie on the Cytoplasmic side of the membrane; it reads KSNDDFKQAFQKLMRFRRTS.

The protein belongs to the G-protein coupled receptor 1 family. Homodimer. Heterodimer with HTR1D. Phosphorylated. Desensitization of the receptor may be mediated by its phosphorylation. Post-translationally, palmitoylated.

It localises to the cell membrane. In terms of biological role, G-protein coupled receptor for 5-hydroxytryptamine (serotonin). Also functions as a receptor for ergot alkaloid derivatives, various anxiolytic and antidepressant drugs and other psychoactive substances, such as lysergic acid diethylamide (LSD). Ligand binding causes a conformation change that triggers signaling via guanine nucleotide-binding proteins (G proteins) and modulates the activity of downstream effectors, such as adenylate cyclase. HTR1B is coupled to G(i)/G(o) G alpha proteins and mediates inhibitory neurotransmission by inhibiting adenylate cyclase activity. Arrestin family members inhibit signaling via G proteins and mediate activation of alternative signaling pathways. Regulates the release of 5-hydroxytryptamine, dopamine and acetylcholine in the brain, and thereby affects neural activity, nociceptive processing, pain perception, mood and behavior. Besides, plays a role in vasoconstriction of cerebral arteries. The protein is 5-hydroxytryptamine receptor 1B (HTR1B) of Didelphis virginiana (North American opossum).